The primary structure comprises 434 residues: Homogentisate 1,2-dioxygenase (434 aa).

Residue histidine 289 is the Proton acceptor of the active site. Positions 332 and 338 each coordinate Fe cation. The homogentisate site is built by tyrosine 347 and histidine 368. Histidine 368 provides a ligand contact to Fe cation.

It belongs to the homogentisate dioxygenase family. In terms of assembly, hexamer; dimer of trimers. Fe cation is required as a cofactor.

The enzyme catalyses homogentisate + O2 = 4-maleylacetoacetate + H(+). It participates in amino-acid degradation; L-phenylalanine degradation; acetoacetate and fumarate from L-phenylalanine: step 4/6. Involved in the catabolism of homogentisate (2,5-dihydroxyphenylacetate or 2,5-OH-PhAc), a central intermediate in the degradation of phenylalanine and tyrosine. Catalyzes the oxidative ring cleavage of the aromatic ring of homogentisate to yield maleylacetoacetate. The chain is Homogentisate 1,2-dioxygenase from Pseudomonas syringae pv. syringae (strain B728a).